Here is a 146-residue protein sequence, read N- to C-terminus: Snaclec mucetin subunit beta (146 aa).

An N-terminal signal peptide occupies residues 1-23 (MGRFIFVSFGLLVVFISLSGTEA). Cystine bridges form between C27-C38, C55-C144, and C121-C136. A C-type lectin domain is found at 34 to 145 (YDEHCYQVFQ…CSSKRYVVCK (112 aa)).

This sequence belongs to the snaclec family. As to quaternary structure, dimer and tetramer of heterodimers of alpha and beta subunits ((alphabeta)(2) and (alphabeta)(4)); disulfide-linked. These two multimeric forms are found. Post-translationally, the complex is glycosylated. As to expression, expressed by the venom gland.

The protein localises to the secreted. Potent platelet activator that acts via GPIb (GP1BA/GP1BB). After activation by the toxin, the receptor is redistributed on platelet surface thanks to cytoskeletal translocation. The indirect activation of integrin alpha-IIb/beta-3 (ITGA2B/ITGB3) also induced by the toxin is downstream the cytoskeletal translocation of GPIb. The polypeptide is Snaclec mucetin subunit beta (Protobothrops mucrosquamatus (Taiwan habu)).